Consider the following 1724-residue polypeptide: Protein CHROMATIN REMODELING 5 (1724 aa).

Disordered stretches follow at residues glutamine 24 to threonine 88 and aspartate 104 to glutamate 415. Over residues asparagine 25 to leucine 34 the composition is skewed to polar residues. Residues glutamate 126–serine 144 show a composition bias toward basic and acidic residues. Residues arginine 138 to serine 164 are a coiled coil. 4 stretches are compositionally biased toward acidic residues: residues glutamate 145 to asparagine 157, proline 170 to asparagine 186, alanine 239 to aspartate 264, and valine 278 to aspartate 297. Residues lysine 301–arginine 313 are compositionally biased toward basic residues. The Nuclear localization signal 1 signature appears at glutamate 320 to serine 327. The span at glutamine 337–aspartate 350 shows a compositional bias: acidic residues. Over residues threonine 362 to glutamine 376 the composition is skewed to polar residues. Basic and acidic residues predominate over residues aspartate 403–aspartate 412. Residues aspartate 420–lysine 499 enclose the Chromo 1 domain. Positions arginine 505–aspartate 525 form a coiled coil. The region spanning serine 533–lysine 597 is the Chromo 2 domain. Residues valine 637 to glycine 809 form the Helicase ATP-binding domain. Aspartate 650–threonine 657 contributes to the ATP binding site. The DEAH box signature appears at aspartate 760 to histidine 763. Residues isoleucine 943–glutamate 1094 form the Helicase C-terminal domain. Residues lysine 1126–histidine 1163 are a coiled coil. The interval alanine 1199 to tyrosine 1245 is disordered. Short sequence motifs (nuclear localization signal) lie at residues lysine 1224–proline 1231 and leucine 1348–glutamine 1355. Positions glycine 1227–serine 1237 are enriched in basic and acidic residues. 2 disordered regions span residues glutamine 1480–aspartate 1524 and lysine 1654–arginine 1724. Positions aspartate 1504–glycine 1520 are enriched in basic and acidic residues. The span at alanine 1658–valine 1667 shows a compositional bias: polar residues. Over residues lysine 1669–threonine 1691 the composition is skewed to basic and acidic residues. A compositionally biased stretch (polar residues) spans glutamate 1692–leucine 1702.

This sequence belongs to the SNF2/RAD54 helicase family.

Its subcellular location is the nucleus. DNA-binding helicase that specifically binds to the promoter of target genes, leading to chromatin remodeling, possibly by promoting deposition of histone H3.3. Probable chromatin remodeling factor. The sequence is that of Protein CHROMATIN REMODELING 5 from Arabidopsis thaliana (Mouse-ear cress).